Consider the following 285-residue polypeptide: UDP-3-O-acyl-N-acetylglucosamine deacetylase (285 aa).

Residues histidine 89, histidine 243, and aspartate 247 each coordinate Zn(2+). Residue histidine 270 is the Proton donor of the active site.

This sequence belongs to the LpxC family. The cofactor is Zn(2+).

The catalysed reaction is a UDP-3-O-[(3R)-3-hydroxyacyl]-N-acetyl-alpha-D-glucosamine + H2O = a UDP-3-O-[(3R)-3-hydroxyacyl]-alpha-D-glucosamine + acetate. It functions in the pathway glycolipid biosynthesis; lipid IV(A) biosynthesis; lipid IV(A) from (3R)-3-hydroxytetradecanoyl-[acyl-carrier-protein] and UDP-N-acetyl-alpha-D-glucosamine: step 2/6. Functionally, catalyzes the hydrolysis of UDP-3-O-myristoyl-N-acetylglucosamine to form UDP-3-O-myristoylglucosamine and acetate, the committed step in lipid A biosynthesis. The polypeptide is UDP-3-O-acyl-N-acetylglucosamine deacetylase (Thermosynechococcus vestitus (strain NIES-2133 / IAM M-273 / BP-1)).